The primary structure comprises 227 residues: 2,3-bisphosphoglycerate-dependent phosphoglycerate mutase (227 aa).

Substrate is bound by residues 8 to 15 (RHGKSVWN), 21 to 22 (TG), R58, 110 to 113 (ERMY), K121, 137 to 138 (RR), and 181 to 182 (GN). H9 serves as the catalytic Tele-phosphohistidine intermediate. E110 acts as the Proton donor/acceptor in catalysis.

This sequence belongs to the phosphoglycerate mutase family. BPG-dependent PGAM subfamily.

It catalyses the reaction (2R)-2-phosphoglycerate = (2R)-3-phosphoglycerate. The protein operates within carbohydrate degradation; glycolysis; pyruvate from D-glyceraldehyde 3-phosphate: step 3/5. Functionally, catalyzes the interconversion of 2-phosphoglycerate and 3-phosphoglycerate. The sequence is that of 2,3-bisphosphoglycerate-dependent phosphoglycerate mutase from Chlamydia caviae (strain ATCC VR-813 / DSM 19441 / 03DC25 / GPIC) (Chlamydophila caviae).